Here is a 590-residue protein sequence, read N- to C-terminus: Putative sodium/calcium exchanger 6 (590 aa).

The N-terminal stretch at 1–19 is a signal peptide; it reads MRIHFFAFLIILSLVGCDG. 11 helical membrane-spanning segments follow: residues 97–117, 139–159, 173–193, 208–228, 230–250, 368–388, 397–417, 440–460, 499–519, 535–555, and 568–588; these read IILI…VSSA, VAGV…GAIA, LGEL…VTIF, IAFY…YDHV, IWMP…VILS, PITL…IQVC, PGLW…VLFF, IAWI…LGVV, AAAI…PFTI, YRLL…AMFA, and LVFI…DILV.

It belongs to the Ca(2+):cation antiporter (CaCA) (TC 2.A.19) family.

It is found in the membrane. This is Putative sodium/calcium exchanger 6 (ncx-6) from Caenorhabditis elegans.